The primary structure comprises 403 residues: S-adenosylmethionine synthase (403 aa).

Residue His-17 coordinates ATP. Asp-19 provides a ligand contact to Mg(2+). Glu-45 is a K(+) binding site. L-methionine-binding residues include Glu-58 and Gln-104. The segment at Gln-104–Thr-114 is flexible loop. Residues Asp-179–Lys-181, Lys-250–Phe-251, Asp-259, Arg-265–Lys-266, Ala-282, and Lys-286 each bind ATP. Residue Asp-259 participates in L-methionine binding. Residue Lys-290 coordinates L-methionine.

The protein belongs to the AdoMet synthase family. Homotetramer; dimer of dimers. Mg(2+) serves as cofactor. Requires K(+) as cofactor.

It localises to the cytoplasm. It catalyses the reaction L-methionine + ATP + H2O = S-adenosyl-L-methionine + phosphate + diphosphate. It participates in amino-acid biosynthesis; S-adenosyl-L-methionine biosynthesis; S-adenosyl-L-methionine from L-methionine: step 1/1. Catalyzes the formation of S-adenosylmethionine (AdoMet) from methionine and ATP. The overall synthetic reaction is composed of two sequential steps, AdoMet formation and the subsequent tripolyphosphate hydrolysis which occurs prior to release of AdoMet from the enzyme. The chain is S-adenosylmethionine synthase from Mycobacterium tuberculosis (strain ATCC 25177 / H37Ra).